Reading from the N-terminus, the 708-residue chain is Probable GTP diphosphokinase RSH3, chloroplastic (708 aa).

Disordered regions lie at residues 1 to 50 (MSLP…AAGG) and 109 to 134 (HSPV…SWLA). A chloroplast-targeting transit peptide spans 1-58 (MSLPAISLYTSPPPGAVYSSEFDPSSRGSSPPCSTAPPSTSHRPPAAAGGLSCLFSSP). 2 stretches are compositionally biased toward low complexity: residues 29-41 (SSPP…PSTS) and 118-131 (PSSS…PPAS). The 105-residue stretch at 233–337 (YLQHCVETAV…IKLADRVHNM (105 aa)) folds into the HD domain.

It belongs to the RelA/SpoT family.

The protein localises to the plastid. The protein resides in the chloroplast. The enzyme catalyses GTP + ATP = guanosine 3'-diphosphate 5'-triphosphate + AMP. Functionally, probable ppGpp (guanosine 3'-diphosphate 5'-diphosphate) synthetase that may be involved in a rapid plant ppGpp-mediated response to pathogens and other stresses. The protein is Probable GTP diphosphokinase RSH3, chloroplastic (RSH3) of Oryza sativa subsp. japonica (Rice).